A 266-amino-acid chain; its full sequence is Chymotrypsin-like elastase family member 1 (266 aa).

The N-terminal stretch at 1 to 16 is a signal peptide; it reads MLRFLVFASLVLCGHS. Residues 17 to 26 constitute a propeptide, activation peptide; it reads TEDVPETDAR. Residues 27 to 264 enclose the Peptidase S1 domain; that stretch reads VVGGAEARRN…YISWMNNVIA (238 aa). Cys56 and Cys72 are joined by a disulfide. His71 serves as the catalytic Charge relay system. The Ca(2+) site is built by Glu85, Asn87, Gln90, and Glu95. Asn87 carries N-linked (GlcNAc...) asparagine glycosylation. Catalysis depends on Asp119, which acts as the Charge relay system. 3 disulfide bridges follow: Cys153-Cys220, Cys184-Cys200, and Cys210-Cys240. Ser214 (charge relay system) is an active-site residue.

Belongs to the peptidase S1 family. Elastase subfamily. The cofactor is Ca(2+).

Its subcellular location is the secreted. The catalysed reaction is Hydrolysis of proteins, including elastin. Preferential cleavage: Ala-|-Xaa.. Functionally, serine proteases that hydrolyze many proteins in addition to elastin. The protein is Chymotrypsin-like elastase family member 1 (Cela1) of Mus musculus (Mouse).